A 271-amino-acid polypeptide reads, in one-letter code: Glutamate racemase (271 aa).

Substrate-binding positions include 10–11 (DS) and 42–43 (YG). C73 (proton donor/acceptor) is an active-site residue. Residue 74-75 (NT) participates in substrate binding. The Proton donor/acceptor role is filled by C183. A substrate-binding site is contributed by 184 to 185 (TH).

It belongs to the aspartate/glutamate racemases family.

It carries out the reaction L-glutamate = D-glutamate. It participates in cell wall biogenesis; peptidoglycan biosynthesis. Its function is as follows. Provides the (R)-glutamate required for cell wall biosynthesis. The sequence is that of Glutamate racemase from Lactococcus lactis subsp. lactis (strain IL1403) (Streptococcus lactis).